Here is a 347-residue protein sequence, read N- to C-terminus: Ribosomal RNA large subunit methyltransferase M (347 aa).

S-adenosyl-L-methionine is bound by residues Ser-184, 217 to 220 (APGG), Asp-236, Asp-256, and Asp-272. Catalysis depends on Lys-301, which acts as the Proton acceptor.

This sequence belongs to the class I-like SAM-binding methyltransferase superfamily. RNA methyltransferase RlmE family. RlmM subfamily. In terms of assembly, monomer.

The protein resides in the cytoplasm. It catalyses the reaction cytidine(2498) in 23S rRNA + S-adenosyl-L-methionine = 2'-O-methylcytidine(2498) in 23S rRNA + S-adenosyl-L-homocysteine + H(+). Functionally, catalyzes the 2'-O-methylation at nucleotide C2498 in 23S rRNA. This is Ribosomal RNA large subunit methyltransferase M from Xanthomonas oryzae pv. oryzae (strain KACC10331 / KXO85).